We begin with the raw amino-acid sequence, 644 residues long: Acetyl-coenzyme A synthetase (644 aa).

CoA-binding positions include 190–193 and Thr308; that span reads RGSK. Residues 384 to 386, 408 to 413, Asp497, and Arg512 each bind ATP; these read GEP and DTWWQT. Ser520 is a CoA binding site. Arg523 is a binding site for ATP. Residues Val534, His536, and Val539 each contribute to the Mg(2+) site. Arg581 is a CoA binding site. The residue at position 606 (Lys606) is an N6-acetyllysine.

It belongs to the ATP-dependent AMP-binding enzyme family. The cofactor is Mg(2+). Post-translationally, acetylated. Deacetylation by the SIR2-homolog deacetylase activates the enzyme.

The catalysed reaction is acetate + ATP + CoA = acetyl-CoA + AMP + diphosphate. Catalyzes the conversion of acetate into acetyl-CoA (AcCoA), an essential intermediate at the junction of anabolic and catabolic pathways. AcsA undergoes a two-step reaction. In the first half reaction, AcsA combines acetate with ATP to form acetyl-adenylate (AcAMP) intermediate. In the second half reaction, it can then transfer the acetyl group from AcAMP to the sulfhydryl group of CoA, forming the product AcCoA. In Magnetococcus marinus (strain ATCC BAA-1437 / JCM 17883 / MC-1), this protein is Acetyl-coenzyme A synthetase.